A 385-amino-acid polypeptide reads, in one-letter code: Proliferation-associated protein A (385 aa).

Belongs to the peptidase M24 family.

The chain is Proliferation-associated protein A (prlA) from Dictyostelium discoideum (Social amoeba).